Consider the following 942-residue polypeptide: Lon protease homolog 4, chloroplastic/mitochondrial (942 aa).

A Phosphoserine modification is found at Ser54. Residues 79-301 (VIALPLPHKP…LTLELVKKEV (223 aa)) form the Lon N-terminal domain. ATP is bound at residue 456-463 (GPTGVGKT). The interval 673–725 (ISDDVTTDTEETKSLAKTDLESPETSAEGSTVLTDELATGDPTESTTEQSGEV) is disordered. Over residues 682 to 692 (EETKSLAKTDL) the composition is skewed to basic and acidic residues. Over residues 695-705 (PETSAEGSTVL) the composition is skewed to polar residues. Residues 756–940 (QTPVGVVMGL…EQIFELAFGY (185 aa)) enclose the Lon proteolytic domain. Residues Ser846 and Lys889 contribute to the active site.

It belongs to the peptidase S16 family. In terms of assembly, homohexamer or homoheptamer. Organized in a ring with a central cavity.

It localises to the mitochondrion matrix. It is found in the plastid. Its subcellular location is the chloroplast thylakoid membrane. The catalysed reaction is Hydrolysis of proteins in presence of ATP.. ATP-dependent serine protease that mediates the selective degradation of misfolded, unassembled or oxidatively damaged polypeptides as well as certain short-lived regulatory proteins in the mitochondrial matrix. May also have a chaperone function in the assembly of inner membrane protein complexes. Participates in the regulation of mitochondrial gene expression and in the maintenance of the integrity of the mitochondrial genome. Binds to mitochondrial DNA in a site-specific manner. The chain is Lon protease homolog 4, chloroplastic/mitochondrial (LON4) from Arabidopsis thaliana (Mouse-ear cress).